The primary structure comprises 744 residues: Glucosamine inositolphosphorylceramide transferase 1 (744 aa).

The next 3 helical transmembrane spans lie at 31–51 (FLVAAAAGAALVGGVYFWLVV), 378–398 (SLFGYMGFLVAVALVTFVGFV), and 460–480 (LFFCVIALIGIVNVCIAVHFL). Residues Asn534, 558 to 563 (NSLNNR), 579 to 581 (DDD), Arg609, and 665 to 669 (FNCED) each bind substrate. Asp581 provides a ligand contact to Mn(2+). Cysteines 667 and 718 form a disulfide. Asp669 is a catalytic residue.

The protein belongs to the glycosyltransferase 64 family. Requires Mn(2+) as cofactor.

It is found in the membrane. Its pathway is sphingolipid metabolism. Essential protein. Glycosyltransferase that mediates the glycosylation of glycosylinositol phosphorylceramides (GIPCs), the major sphingolipids in the plasma membrane; acts as a HexN(Ac)-specific GIPC sugar transferase. Responsible for the glycosylation of a subgroup of GIPCs found in seeds and pollen that contain GlcNAc and GlcN (GlcN(Ac)). Maybe involved in the maintenance of cell-cell adhesion. The sequence is that of Glucosamine inositolphosphorylceramide transferase 1 from Oryza sativa subsp. indica (Rice).